Here is a 204-residue protein sequence, read N- to C-terminus: Casparian strip membrane protein 3 (204 aa).

Over 1-41 the chain is Cytoplasmic; that stretch reads MKNESTFIDVPADSSSAMKGKAPLIGVAKDHTASGSGGYNR. The chain crosses the membrane as a helical span at residues 42–62; sequence GLSIFDFLLRLAAIVAASVAA. Residues 63–92 lie on the Extracellular side of the membrane; that stretch reads GTMFTSDETLPFFTQFLQFQAGYDDLPTFQ. The helical transmembrane segment at 93–113 threads the bilayer; sequence FFVISMSLVSGYIVLSLPISV. The Cytoplasmic segment spans residues 114–125; that stretch reads VTIVRPLAAAPR. Residues 126 to 146 form a helical membrane-spanning segment; the sequence is LLLLVLDTAVMGLTMAAASSA. Residues 147 to 204 lie on the Extracellular side of the membrane; sequence AAISYVAHNGNQNTNWLPICQQFGDFCQKTSGGCGLFLCRRRVFHDPGCPLRSRSQRH.

This sequence belongs to the Casparian strip membrane proteins (CASP) family. In terms of assembly, homodimer and heterodimers.

Its subcellular location is the cell membrane. Regulates membrane-cell wall junctions and localized cell wall deposition. Required for establishment of the Casparian strip membrane domain (CSD) and the subsequent formation of Casparian strips, a cell wall modification of the root endodermis that determines an apoplastic barrier between the intraorganismal apoplasm and the extraorganismal apoplasm and prevents lateral diffusion. The chain is Casparian strip membrane protein 3 from Raphanus sativus (Radish).